We begin with the raw amino-acid sequence, 429 residues long: Serine--tRNA ligase (429 aa).

Residue 236 to 238 (TGE) participates in L-serine binding. 267 to 269 (RSE) serves as a coordination point for ATP. Residue Glu290 participates in L-serine binding. 354–357 (EISS) serves as a coordination point for ATP. Ser390 serves as a coordination point for L-serine.

This sequence belongs to the class-II aminoacyl-tRNA synthetase family. Type-1 seryl-tRNA synthetase subfamily. Homodimer. The tRNA molecule binds across the dimer.

It localises to the cytoplasm. The enzyme catalyses tRNA(Ser) + L-serine + ATP = L-seryl-tRNA(Ser) + AMP + diphosphate + H(+). It catalyses the reaction tRNA(Sec) + L-serine + ATP = L-seryl-tRNA(Sec) + AMP + diphosphate + H(+). Its pathway is aminoacyl-tRNA biosynthesis; selenocysteinyl-tRNA(Sec) biosynthesis; L-seryl-tRNA(Sec) from L-serine and tRNA(Sec): step 1/1. Functionally, catalyzes the attachment of serine to tRNA(Ser). Is also able to aminoacylate tRNA(Sec) with serine, to form the misacylated tRNA L-seryl-tRNA(Sec), which will be further converted into selenocysteinyl-tRNA(Sec). The protein is Serine--tRNA ligase of Vesicomyosocius okutanii subsp. Calyptogena okutanii (strain HA).